The sequence spans 224 residues: V-type proton ATPase subunit S1-like protein (224 aa).

A helical transmembrane segment spans residues 147-167; sequence PAFLIGLAMSLILLLVLAYAL.

It belongs to the vacuolar ATPase subunit S1 family.

It localises to the membrane. This Homo sapiens (Human) protein is V-type proton ATPase subunit S1-like protein (ATP6AP1L).